The chain runs to 1485 residues: ABC multidrug transporter I (1485 aa).

Disordered stretches follow at residues 1–57 (MDEK…EEFS) and 75–111 (KQIS…ALRG). The span at 8–24 (SESSNGSDVDSLSTASA) shows a compositional bias: polar residues. A glycan (N-linked (GlcNAc...) asparagine) is linked at Asn-12. The segment covering 85-95 (GKTEDVERSDS) has biased composition (basic and acidic residues). Asn-132, Asn-335, and Asn-451 each carry an N-linked (GlcNAc...) asparagine glycan. The 249-residue stretch at 163 to 411 (MHMLGYGKKG…FESLGFKERP (249 aa)) folds into the ABC transporter 1 domain. A run of 7 helical transmembrane segments spans residues 522-542 (FAQT…GTVW), 556-576 (GGLL…ELVS), 600-620 (IAQI…FSII), 623-643 (FMCG…IIVL), 664-684 (YAMK…GYLI), 691-711 (EWLR…ALMV), and 774-794 (FGIM…HGET). Positions 846–1089 (FTWEDVCYDV…LLDYFRRNGA (244 aa)) constitute an ABC transporter 2 domain. Residue 882–889 (GASGAGKT) coordinates ATP. The next 5 membrane-spanning stretches (helical) occupy residues 1184–1204 (YGFT…LAFL), 1211–1231 (ASLQ…AIIL), 1268–1288 (LPYS…IPGF), 1299–1319 (FLMV…ISAL), and 1325–1345 (IASQ…GVAI). Asn-1396 and Asn-1418 each carry an N-linked (GlcNAc...) asparagine glycan. The helical transmembrane segment at 1449–1469 (LGIFLAFIGSNLIILFLAVSF) threads the bilayer.

This sequence belongs to the ABC transporter superfamily. ABCG family. PDR (TC 3.A.1.205) subfamily.

It localises to the cell membrane. The enzyme catalyses fluconazole(in) + ATP + H2O = fluconazole(out) + ADP + phosphate + H(+). Its activity is regulated as follows. The efflux inhibitor FK506 does not impair the transport activity. Functionally, ABC efflux transporter that confers resistance to fluconazole (FLC) but shows no resistance to other azoles. Is also able to transport rhodamine 6G (R-6G), a known substrate for many ABC transporters. This Aspergillus fumigatus (strain ATCC MYA-4609 / CBS 101355 / FGSC A1100 / Af293) (Neosartorya fumigata) protein is ABC multidrug transporter I.